We begin with the raw amino-acid sequence, 1404 residues long: MAWKTLPIYLLLLLSVFVIQQVSSQDLSSCAGRCGEGYSRDATCNCDYNCQHYMECCPDFKRVCTAELSCKGRCFESFERGRECDCDAQCKKYDKCCPDYESFCAEVHNPTSPPSSKKAPPPSGASQTIKSTTKRSPKPPNKKKTKKVIESEEITEEHSVSENQESSSSSSSSSSSSTIRKIKSSKNSAANRELQKKLKVKDNKKNRTKKKPTPKPPVVDEAGSGLDNGDFKVTTPDTSTTQHNKVSTSPKITTAKPINPRPSLPPNSDTSKETSLTVNKETTVETKETTTTNKQTSTDGKEKTTSAKETQSIEKTSAKDLAPTSKVLAKPTPKAETTTKGPALTTPKEPTPTTPKEPASTTPKEPTPTTIKSAPTTPKEPAPTTTKSAPTTPKEPAPTTTKEPAPTTPKEPAPTTTKEPAPTTTKSAPTTPKEPAPTTPKKPAPTTPKEPAPTTPKEPTPTTPKEPAPTTKEPAPTTPKEPAPTAPKKPAPTTPKEPAPTTPKEPAPTTTKEPSPTTPKEPAPTTTKSAPTTTKEPAPTTTKSAPTTPKEPSPTTTKEPAPTTPKEPAPTTPKKPAPTTPKEPAPTTPKEPAPTTTKKPAPTTPKEPAPTTPKETAPTTPKKLTPTTPEKLAPTTPEKPAPTTPEELAPTTPEEPTPTTPEEPAPTTPKAAAPNTPKEPAPTTPKEPAPTTPKEPAPTTPKETAPTTPKGTAPTTLKEPAPTTPKKPAPKELAPTTTKEPTSTTSDKPAPTTPKGTAPTTPKEPAPTTPKEPAPTTPKGTAPTTLKEPAPTTPKKPAPKELAPTTTKGPTSTTSDKPAPTTPKETAPTTPKEPAPTTPKKPAPTTPETPPPTTSEVSTPTTTKEPTTIHKSPDESTPELSAEPTPKALENSPKEPGVPTTKTPAATKPEMTTTAKDKTTERDLRTTPETTTAAPKMTKETATTTEKTTESKITATTTQVTSTTTQDTTPFKITTLKTTTLAPKVTTTKKTITTTEIMNKPEETAKPKDRATNSKATTPKPQKPTKAPKKPTSTKKPKTMPRVRKPKTTPTPRKMTSTMPELNPTSRIAEAMLQTTTRPNQTPNSKLVEVNPKSEDAGGAEGETPHMLLRPHVFMPEVTPDMDYLPRVPNQGIIINPMLSDETNICNGKPVDGLTTLRNGTLVAFRGHYFWMLSPFSPPSPARRITEVWGIPSPIDTVFTRCNCEGKTFFFKDSQYWRFTNDIKDAGYPKPIFKGFGGLTGQIVAALSTAKYKNWPESVYFFKRGGSIQQYIYKQEPVQKCPGRRPALNYPVYGETTQVRRRRFERAIGPSQTHTIRIQYSPARLAYQDKGVLHNEVKVSILWRGLPNVVTSAISLPNIRKPDGYDYYAFSKDQYYNIDVPSRTARAITTRSGQTLSKVWYNCP.

Positions Met-1–Ser-24 are cleaved as a signal peptide. 2 consecutive SMB domains span residues Asp-26–Ser-69 and Ala-66–His-108. 14 disulfide bridges follow: Cys-30–Cys-34, Cys-30–Cys-46, Cys-34–Cys-64, Cys-44–Cys-46, Cys-44–Cys-57, Cys-50–Cys-56, Cys-57–Cys-64, Cys-70–Cys-74, Cys-70–Cys-86, Cys-74–Cys-104, Cys-84–Cys-86, Cys-84–Cys-97, Cys-90–Cys-96, and Cys-97–Cys-104. A disordered region spans residues Thr-111–Gln-966. O-linked (GalNAc...) serine glycosylation is found at Ser-123 and Ser-136. Positions Thr-132–Lys-146 are enriched in basic residues. Low complexity predominate over residues Ser-166–Ser-177. The span at Glu-193–Lys-205 shows a compositional bias: basic and acidic residues. Asn-206 is a glycosylation site (N-linked (GlcNAc...) asparagine). Residues Thr-235 to Ile-252 are compositionally biased toward polar residues. Thr-240 and Thr-253 each carry an O-linked (GalNAc...) threonine glycan. A compositionally biased stretch (polar residues) spans Pro-266–Leu-276. Residues Thr-277, Thr-291, and Thr-305 are each glycosylated (O-linked (GalNAc...) threonine). Ser-306 carries an O-linked (GalNAc...) serine glycan. Residue Thr-310 is glycosylated (O-linked (GalNAc...) threonine). A glycan (O-linked (GalNAc...) serine) is linked at Ser-317. 3 O-linked (GalNAc...) threonine glycosylation sites follow: Thr-324, Thr-332, and Thr-338. Composition is skewed to low complexity over residues Ala-329–Lys-348 and Lys-356–Ala-405. Repeat 1 spans residues Lys-348 to Pro-355. The 59 X 8 AA repeats of K-X-P-X-P-T-T-X stretch occupies residues Lys-348 to Ser-855. One copy of the 2; approximate repeat lies at Lys-356 to Pro-363. Copy 3 of the repeat occupies Lys-364–Ile-371. Thr-367 is a glycosylation site (O-linked (GalNAc...) threonine). A 4; approximate repeat occupies Lys-372 to Pro-378. Ser-373 carries an O-linked (GalNAc...) serine glycan. 3 O-linked (GalNAc...) threonine glycosylation sites follow: Thr-376, Thr-384, and Thr-385. The stretch at Lys-379–Thr-386 is repeat 5. The stretch at Lys-387–Pro-393 is one 6; approximate repeat. O-linked (GalNAc...) serine glycosylation occurs at Ser-388. Residues Thr-391, Thr-399, Thr-400, Thr-407, Thr-408, Thr-415, and Thr-423 are each glycosylated (O-linked (GalNAc...) threonine). 4 repeat units span residues Lys-394–Thr-401, Lys-402–Pro-409, Lys-410–Thr-417, and Lys-418–Thr-425. Over residues Ala-413–Thr-431 the composition is skewed to low complexity. The stretch at Lys-426 to Pro-432 is one 11; approximate repeat. Ser-427 carries O-linked (GalNAc...) serine glycosylation. Thr-430, Thr-438, Thr-439, Thr-446, Thr-447, Thr-454, and Thr-455 each carry an O-linked (GalNAc...) threonine glycan. Pro residues-rich tracts occupy residues Pro-432–Pro-467 and Pro-476–Pro-506. 4 tandem repeats follow at residues Lys-433–Pro-440, Lys-441–Pro-448, Lys-449–Pro-456, and Lys-457–Pro-464. The 16; approximate repeat unit spans residues Lys-465–Thr-471. Repeat 17 spans residues Lys-472–Pro-479. Thr-477, Thr-478, Thr-485, Thr-493, Thr-494, Thr-501, Thr-502, and Thr-509 each carry an O-linked (GalNAc...) threonine glycan. The 18; approximate repeat unit spans residues Lys-480–Pro-487. Residues Lys-488–Pro-495 form a 19; approximate repeat. Tandem repeats lie at residues Lys-496–Pro-503, Lys-504–Thr-511, Lys-512–Pro-519, and Lys-520–Thr-527. Over residues Ala-523 to Ala-561 the composition is skewed to low complexity. O-linked (GalNAc...) threonine glycosylation occurs at Thr-525. The 24; approximate repeat unit spans residues Lys-528–Thr-534. Ser-529 carries an O-linked (GalNAc...) serine glycan. Residues Thr-532, Thr-540, and Thr-541 are each glycosylated (O-linked (GalNAc...) threonine). Repeat 25 spans residues Lys-535 to Thr-542. Residues Lys-543 to Pro-549 form a 26; approximate repeat. 6 consecutive repeat copies span residues Lys-550–Thr-557, Lys-558–Pro-565, Lys-566–Pro-573, Lys-574–Pro-581, Lys-582–Pro-589, and Lys-590–Thr-597. Residue Ser-553 is glycosylated (O-linked (GalNAc...) serine). Thr-555, Thr-563, Thr-564, Thr-571, Thr-572, Thr-579, Thr-580, Thr-587, Thr-588, Thr-595, Thr-603, Thr-604, Thr-611, Thr-612, Thr-616, Thr-619, and Thr-627 each carry an O-linked (GalNAc...) threonine glycan. Positions Pro-562 to Pro-592 are enriched in pro residues. One copy of the 33; approximate repeat lies at Lys-598 to Pro-605. The span at Pro-602–Thr-611 shows a compositional bias: pro residues. Residues Lys-606 to Pro-613 form repeat 34. Residues Thr-612–Thr-636 show a composition bias toward low complexity. The 35; approximate repeat unit spans residues Lys-614 to Pro-621. The 36; approximate repeat unit spans residues Lys-622–Pro-629. The stretch at Glu-638–Pro-645 is one 37; approximate repeat. The span at Pro-653–Thr-667 shows a compositional bias: pro residues. Residues Glu-662–Pro-669 form a 38; approximate repeat. O-linked (GalNAc...) threonine glycosylation is found at Thr-676, Thr-683, Thr-684, Thr-691, Thr-692, Thr-699, Thr-700, Thr-704, and Thr-707. The segment covering Pro-677–Thr-699 has biased composition (pro residues). 3 consecutive repeat copies span residues Lys-678 to Pro-685, Lys-686 to Pro-693, and Lys-694 to Pro-701. Over residues Thr-700–Ala-721 the composition is skewed to low complexity. One copy of the 42; approximate repeat lies at Lys-702–Pro-709. One copy of the 43; approximate repeat lies at Lys-710–Leu-717. Repeat 44 spans residues Lys-718 to Pro-725. Residues Thr-723, Thr-724, and Thr-736 are each glycosylated (O-linked (GalNAc...) threonine). The span at Pro-728–Thr-761 shows a compositional bias: low complexity. Residues Lys-731–Thr-738 form a 45; approximate repeat. The stretch at Lys-739–Ser-746 is one 46; approximate repeat. Residues Asp-747–Pro-754 form a 47; approximate repeat. A 48; approximate repeat occupies Lys-755 to Pro-762. A compositionally biased stretch (pro residues) spans Pro-762–Thr-776. A run of 2 repeats spans residues Lys-763–Pro-770 and Lys-771–Pro-778. O-linked (GalNAc...) threonine glycosylation is found at Thr-768, Thr-769, Thr-776, and Thr-777. Low complexity predominate over residues Thr-777–Ala-790. Residues Lys-779–Leu-786 form a 51; approximate repeat. Residues Lys-787 to Pro-794 form repeat 52. O-linked (GalNAc...) threonine glycosylation is found at Thr-792, Thr-793, and Thr-805. Residues Pro-797 to Thr-830 show a composition bias toward low complexity. The 53; approximate repeat unit spans residues Lys-800–Thr-807. The stretch at Lys-808 to Ser-815 is one 54; approximate repeat. Ser-812 carries an O-linked (GalNAc...) serine glycan. The stretch at Asp-816–Pro-823 is one 55; approximate repeat. A 56; approximate repeat occupies Lys-824–Pro-831. 3 O-linked (GalNAc...) threonine glycosylation sites follow: Thr-829, Thr-837, and Thr-838. Pro residues predominate over residues Pro-831–Thr-853. 2 repeat units span residues Lys-832–Pro-839 and Lys-840–Pro-847. A 59; approximate repeat occupies Glu-848–Ser-855. Low complexity predominate over residues Thr-854 to Pro-866. O-linked (GalNAc...) serine glycosylation is present at Ser-892. Residues Pro-899–Thr-914 show a composition bias toward low complexity. A glycan (O-linked (GalNAc...) threonine) is linked at Thr-900. Residues Ala-915–Thr-926 are compositionally biased toward basic and acidic residues. The span at Thr-927–Gln-966 shows a compositional bias: low complexity. 2 O-linked (GalNAc...) threonine glycosylation sites follow: Thr-930 and Thr-931. Ser-962 is a glycosylation site (O-linked (GalNAc...) serine). 6 O-linked (GalNAc...) threonine glycosylation sites follow: Thr-963, Thr-968, Thr-975, Thr-978, Thr-979, and Thr-980. Positions Ile-992–Thr-1104 are disordered. A compositionally biased stretch (basic and acidic residues) spans Asn-999 to Thr-1012. Residues Lys-1026–Lys-1047 show a composition bias toward basic residues. Thr-1039 carries an O-linked (GalNAc...) threonine glycan. Low complexity predominate over residues Thr-1048–Pro-1060. Polar residues predominate over residues Leu-1073–Ser-1085. The cysteines at positions 1146 and 1403 are disulfide-linked. Hemopexin repeat units follow at residues Gly-1148–Ile-1191 and Pro-1192–Leu-1239. The N-linked (GlcNAc...) asparagine glycan is linked to Asn-1159. Thr-1161 carries an O-linked (GalNAc...) threonine glycan.

In terms of assembly, homodimer; disulfide-linked. Post-translationally, N-glycosylated. O-glycosylated; contains glycosaminoglycan chondroitin sulfate and keratan sulfate. O-glycosylated with sialylated oligosaccharides which are predominantly represented by the monosialylated core type I structure, NeuNAcalpha2-3Galbeta1-3GalNAc, with smaller amounts of disialylated O-glycans. In terms of processing, the disulfide bond between Cys-1146 and Cys-1403 is essential for protein cleavage. Post-translationally, proteolytically cleaved by cathepsin CTSG. In terms of tissue distribution, highly expressed in synovial tissue, cartilage and liver and weakly in heart and lung. Isoform B is expressed in kidney, lung, liver, heart and brain. Isoform C and isoform D are widely expressed.

It is found in the secreted. Functionally, plays a role in boundary lubrication within articulating joints. Prevents protein deposition onto cartilage from synovial fluid by controlling adhesion-dependent synovial growth and inhibiting the adhesion of synovial cells to the cartilage surface. Isoform F plays a role as a growth factor acting on the primitive cells of both hematopoietic and endothelial cell lineages. This Homo sapiens (Human) protein is Proteoglycan 4 (PRG4).